The sequence spans 229 residues: Cytidylate kinase (229 aa).

15-23 (GPAASGKST) is an ATP binding site.

The protein belongs to the cytidylate kinase family. Type 1 subfamily.

The protein localises to the cytoplasm. It catalyses the reaction CMP + ATP = CDP + ADP. The enzyme catalyses dCMP + ATP = dCDP + ADP. The chain is Cytidylate kinase from Herpetosiphon aurantiacus (strain ATCC 23779 / DSM 785 / 114-95).